Consider the following 334-residue polypeptide: Nucleoid-associated protein ESA_01050 (334 aa).

The protein belongs to the YejK family.

The protein localises to the cytoplasm. It is found in the nucleoid. The protein is Nucleoid-associated protein ESA_01050 of Cronobacter sakazakii (strain ATCC BAA-894) (Enterobacter sakazakii).